The following is a 181-amino-acid chain: Germinal center-associated signaling and motility protein (181 aa).

The residue at position 102 (Ser102) is a Phosphoserine. The span at 117 to 128 (AERHKESSRGTE) shows a compositional bias: basic and acidic residues. The tract at residues 117–181 (AERHKESSRG…PYETHFSYPQ (65 aa)) is disordered. Tyr150 is modified (phosphotyrosine).

As to quaternary structure, interacts with ACTB and MYH2; the interaction with MYH2 is increased by IL6-induced phosphorylation. Interacts (via C-terminus) with ARHGEF11 (via DH domain). Interacts with ARHGEF12. Interacts with SYK; the interaction increases after B-cell receptor stimulation, resulting in enhanced SYK autophosphorylation and activity. Phosphorylation on tyrosine residues can be induced by IL6. Phosphorylation is mediated by LYN. Post-translationally, targeted by the ubiquitin E3 ligase subunit FBXO10 to mediate its ubiquitination and degradation. As to expression, highly expressed in normal germinal center (GC) B-cells. Expressed in spleen and, to a lesser extent, bone marrow.

The protein resides in the cytoplasm. It localises to the cell membrane. Its function is as follows. Involved in the negative regulation of lymphocyte motility. It mediates the migration-inhibitory effects of IL6. Serves as a positive regulator of the RhoA signaling pathway. Enhancement of RhoA activation results in inhibition of lymphocyte and lymphoma cell motility by activation of its downstream effector ROCK. Is a regulator of B-cell receptor signaling, that acts through SYK kinase activation. The chain is Germinal center-associated signaling and motility protein (Gcsam) from Mus musculus (Mouse).